The primary structure comprises 72 residues: MSKVCLLTGKKPKYGNSVSHANNHTRTRFEPNLHTKKIWIEEEKQFVKVKLSAKAMKIIAKTGTAELAKLLK.

Belongs to the bacterial ribosomal protein bL28 family.

The polypeptide is Large ribosomal subunit protein bL28 (Chlorobium chlorochromatii (strain CaD3)).